Consider the following 983-residue polypeptide: Serine/threonine-protein kinase N2 (983 aa).

The REM-1 1 domain maps to K33 to V109. An N6-acetyllysine modification is found at K77. Residues I107–N135 are disordered. Position 110 is a phosphoserine (S110). 2 positions are modified to phosphothreonine: T121 and T124. Residues T121–N135 are compositionally biased toward low complexity. 2 consecutive REM-1 domains span residues T121–L203 and A204–R284. Residues S301, S305, S359, and S361 each carry the phosphoserine modification. The segment at T351–L382 is disordered. Residues S352–F472 enclose the C2 domain. Residues R364–R380 are compositionally biased toward low complexity. The necessary to rescue apical junction formation stretch occupies residues N381–C462. S534, S582, S619, and S630 each carry phosphoserine. Residues L553–E588 are disordered. The 260-residue stretch at F656 to F915 folds into the Protein kinase domain. Residues L662–V670 and K685 contribute to the ATP site. D781 (proton acceptor) is an active-site residue. Phosphothreonine; by PDPK1 is present on T815. The interval R916–F976 is necessary for the catalytic activity. The AGC-kinase C-terminal domain occupies R916–C983. S951 is modified (phosphoserine). At T957 the chain carries Phosphothreonine. The interval D977–C983 is negatively regulates the responsiveness of the catalytic activity by cardiolipin and is required for optimal activation by the GTP-bound RhoA.

This sequence belongs to the protein kinase superfamily. AGC Ser/Thr protein kinase family. PKC subfamily. As to quaternary structure, interacts (via the REM repeats) with RHOA (GTP-bound form preferentially) and interacts (via the REM repeats) with RAC1 (GTP-bound form preferentially); the interactions induce its autophosphorylation. Interacts with NCK1 (via SH3 domains). Interacts with RHOC. Interacts with NCK1 and NCK2. Interacts with CD44. Interacts (via C-terminal kinase domain) with PDPK1; the interaction stimulates PDPK1 kinase activity. Interacts with MAP3K2; the interaction activates PRK2 kinase activity in a MAP3K2-independent kinase activity. Interacts (via C-terminal domain) with AKT1; the interaction occurs with the C-terminal cleavage product of PRK2 in apoptotic cells. Interacts (via C-terminus) with PTPN13 (via PDZ 3 domain). Interacts with CDK10. Phosphorylated during mitosis. Autophosphorylated. Phosphorylated. Phosphorylated by CDK10. In terms of processing, activated by limited proteolysis with trypsin. Proteolytically cleaved by caspase-3 during the induction of apoptotic cell death. Ubiquitous. Highly expressed in liver and lung Expressed in astrocytes (at protein level). Ubiquitous.

It localises to the cytoplasm. The protein resides in the nucleus. The protein localises to the membrane. Its subcellular location is the cell projection. It is found in the lamellipodium. It localises to the cytoskeleton. The protein resides in the cleavage furrow. The protein localises to the midbody. Its subcellular location is the cell junction. The catalysed reaction is L-seryl-[protein] + ATP = O-phospho-L-seryl-[protein] + ADP + H(+). The enzyme catalyses L-threonyl-[protein] + ATP = O-phospho-L-threonyl-[protein] + ADP + H(+). With respect to regulation, kinase activity is activated upon binding to GTP-bound Rho1/Rac1 GTPases. Activated by caspase-3 (CASP3) cleavage during apoptosis. Activated by lipids, particularly cardiolipin and to a lesser extent by other acidic phospholipids and unsaturated fatty acids. Two specific sites, Thr-815 (activation loop of the kinase domain) and Thr-957 (turn motif), need to be phosphorylated for its full activation. Its function is as follows. PKC-related serine/threonine-protein kinase and Rho/Rac effector protein that participates in specific signal transduction responses in the cell. Plays a role in the regulation of cell cycle progression, actin cytoskeleton assembly, cell migration, cell adhesion, tumor cell invasion and transcription activation signaling processes. Phosphorylates CTTN in hyaluronan-induced astrocytes and hence decreases CTTN ability to associate with filamentous actin. Phosphorylates HDAC5, therefore lead to impair HDAC5 import. Direct RhoA target required for the regulation of the maturation of primordial junctions into apical junction formation in bronchial epithelial cells. Required for G2/M phases of the cell cycle progression and abscission during cytokinesis in a ECT2-dependent manner. Stimulates FYN kinase activity that is required for establishment of skin cell-cell adhesion during keratinocytes differentiation. Regulates epithelial bladder cells speed and direction of movement during cell migration and tumor cell invasion. Inhibits Akt pro-survival-induced kinase activity. Mediates Rho protein-induced transcriptional activation via the c-fos serum response factor (SRF). Involved in the negative regulation of ciliogenesis. The polypeptide is Serine/threonine-protein kinase N2 (Pkn2) (Mus musculus (Mouse)).